We begin with the raw amino-acid sequence, 369 residues long: Putative agmatine deiminase (369 aa).

The active-site Amidino-cysteine intermediate is the C361.

Belongs to the agmatine deiminase family.

It carries out the reaction agmatine + H2O = N-carbamoylputrescine + NH4(+). The protein is Putative agmatine deiminase of Streptococcus mutans serotype c (strain ATCC 700610 / UA159).